Consider the following 178-residue polypeptide: Hypoxanthine-guanine phosphoribosyltransferase (178 aa).

Diphosphate is bound by residues Lys46 and Gly47. Position 103 (Asp103) interacts with Mg(2+). The Proton acceptor role is filled by Asp106. Residues Lys134, 155–156 (FL), and Asp162 each bind GMP. Residue Arg168 participates in diphosphate binding.

It belongs to the purine/pyrimidine phosphoribosyltransferase family. Mg(2+) serves as cofactor.

It is found in the cytoplasm. It carries out the reaction IMP + diphosphate = hypoxanthine + 5-phospho-alpha-D-ribose 1-diphosphate. It catalyses the reaction GMP + diphosphate = guanine + 5-phospho-alpha-D-ribose 1-diphosphate. It participates in purine metabolism; IMP biosynthesis via salvage pathway; IMP from hypoxanthine: step 1/1. Its pathway is purine metabolism; GMP biosynthesis via salvage pathway; GMP from guanine: step 1/1. Purine salvage pathway enzyme that catalyzes the transfer of the ribosyl-5-phosphate group from 5-phospho-alpha-D-ribose 1-diphosphate (PRPP) to the N9 position of the 6-oxopurines hypoxanthine and guanine to form the corresponding ribonucleotides IMP (inosine 5'-monophosphate) and GMP (guanosine 5'-monophosphate), with the release of PPi. The sequence is that of Hypoxanthine-guanine phosphoribosyltransferase (hpt) from Aquifex aeolicus (strain VF5).